A 410-amino-acid polypeptide reads, in one-letter code: Lysosome-associated membrane glycoprotein 2 (410 aa).

The N-terminal stretch at 1 to 28 (MVCFRLFPVPGSGLVLVCLVLGAVRSYA) is a signal peptide. Residues 29 to 192 (LELNLTDSEN…STNEFLCDKD (164 aa)) form a first lumenal domain region. The Lumenal segment spans residues 29 to 375 (LELNLTDSEN…QDCSADDDNF (347 aa)). N-linked (GlcNAc...) (polylactosaminoglycan) asparagine glycans are attached at residues N32 and N38. Residues C41 and C79 are joined by a disulfide bond. Residues N49, N58, N75, N101, N123, and N179 are each glycosylated (N-linked (GlcNAc...) asparagine). A disulfide bridge connects residues C153 and C189. A hinge region spans residues 193–228 (KTSTVAPTIHTTVPSPTTTPTPKEKPEAGTYSVNNG). O-linked (GalNAc...) serine glycosylation is present at S195. 4 O-linked (GalNAc...) threonine glycosylation sites follow: T196, T200, T203, and T204. The span at 199 to 213 (PTIHTTVPSPTTTPT) shows a compositional bias: low complexity. Positions 199–221 (PTIHTTVPSPTTTPTPKEKPEAG) are disordered. S207 carries an O-linked (GalNAc...) serine; partial glycan. T209 carries O-linked (GalNAc...) threonine; partial glycosylation. 2 O-linked (GalNAc...) threonine glycosylation sites follow: T210 and T211. An O-linked (GalNAc...) threonine; partial glycan is attached at T213. N-linked (GlcNAc...) asparagine glycosylation is found at N229, N242, N257, N275, and N300. The interval 229-375 (NDTCLLATMG…QDCSADDDNF (147 aa)) is second lumenal domain. Cysteines 232 and 265 form a disulfide. N307 carries N-linked (GlcNAc...) (polylactosaminoglycan) asparagine glycosylation. 2 N-linked (GlcNAc...) asparagine glycosylation sites follow: N317 and N356. C331 and C368 are oxidised to a cystine. Residues 376-399 (LVPIAVGAALAGVLILVLLAYFIG) form a helical membrane-spanning segment. Residues 400 to 410 (LKHHHAGYEQF) are Cytoplasmic-facing. The tract at residues 401-404 (KHHH) is important for binding and subsequent lysosomal degradation of target proteins.

This sequence belongs to the LAMP family. Monomer. Homodimer. Homotrimer. Forms large homooligomers. Interacts (via its cytoplasmic region) with HSPA8; HSPA8 mediates recruitment of proteins with a KFERQ motif to the surface of the lysosome for chaperone-mediated autophagy. Interacts with HSP90 in the lysosome lumen; this enhances LAMP2 stability. Interacts with MLLT11. Interacts with ABCB9. Interacts with FURIN. Interacts with CT55; this interaction may be important for LAMP2 protein stability. Interacts with TMEM175; inhibiting the proton channel activity of TMEM175. Forms a ternary complex with RAB7A and RUFY4 (via RUN domain); the interaction with RAB7A is mediated by RUFY4 (via RUN and coiled coil domains). As to quaternary structure, (Microbial infection) Interacts with mumps virus protein F; this interaction promotes protein F cleavage by FURIN. O- and N-glycosylated; some of the 16 N-linked glycans are polylactosaminoglycans. Isoform LAMP-2A is highly expressed in placenta, lung and liver, less in kidney and pancreas, low in brain and skeletal muscle. Isoform LAMP-2B is detected in spleen, thymus, prostate, testis, small intestine, colon, skeletal muscle, brain, placenta, lung, kidney, ovary and pancreas and liver. Isoform LAMP-2C is detected in small intestine, colon, heart, brain, skeletal muscle, and at lower levels in kidney and placenta.

The protein resides in the lysosome membrane. It localises to the endosome membrane. It is found in the cell membrane. Its subcellular location is the cytoplasmic vesicle. The protein localises to the autophagosome membrane. In terms of biological role, lysosomal membrane glycoprotein which plays an important role in lysosome biogenesis, lysosomal pH regulation and autophagy. Acts as an important regulator of lysosomal lumen pH regulation by acting as a direct inhibitor of the proton channel TMEM175, facilitating lysosomal acidification for optimal hydrolase activity. Plays an important role in chaperone-mediated autophagy, a process that mediates lysosomal degradation of proteins in response to various stresses and as part of the normal turnover of proteins with a long biological half-live. Functions by binding target proteins, such as GAPDH, NLRP3 and MLLT11, and targeting them for lysosomal degradation. In the chaperone-mediated autophagy, acts downstream of chaperones, such as HSPA8/HSC70, which recognize and bind substrate proteins and mediate their recruitment to lysosomes, where target proteins bind LAMP2. Plays a role in lysosomal protein degradation in response to starvation. Required for the fusion of autophagosomes with lysosomes during autophagy. Cells that lack LAMP2 express normal levels of VAMP8, but fail to accumulate STX17 on autophagosomes, which is the most likely explanation for the lack of fusion between autophagosomes and lysosomes. Required for normal degradation of the contents of autophagosomes. Required for efficient MHC class II-mediated presentation of exogenous antigens via its function in lysosomal protein degradation; antigenic peptides generated by proteases in the endosomal/lysosomal compartment are captured by nascent MHC II subunits. Is not required for efficient MHC class II-mediated presentation of endogenous antigens. Functionally, modulates chaperone-mediated autophagy. Decreases presentation of endogenous antigens by MHCII. Does not play a role in the presentation of exogenous and membrane-derived antigens by MHCII. (Microbial infection) Supports the FURIN-mediated cleavage of mumps virus fusion protein F by interacting with both FURIN and the unprocessed form but not the processed form of the viral protein F. This chain is Lysosome-associated membrane glycoprotein 2 (LAMP2), found in Homo sapiens (Human).